The sequence spans 283 residues: Probable endonuclease 4 (283 aa).

Zn(2+) is bound by residues His-66, His-106, Glu-141, Asp-174, His-177, His-211, Asp-224, His-226, and Glu-256.

It belongs to the AP endonuclease 2 family. Requires Zn(2+) as cofactor.

The enzyme catalyses Endonucleolytic cleavage to 5'-phosphooligonucleotide end-products.. Endonuclease IV plays a role in DNA repair. It cleaves phosphodiester bonds at apurinic or apyrimidinic (AP) sites, generating a 3'-hydroxyl group and a 5'-terminal sugar phosphate. This chain is Probable endonuclease 4, found in Carboxydothermus hydrogenoformans (strain ATCC BAA-161 / DSM 6008 / Z-2901).